The following is a 229-amino-acid chain: Urease accessory protein UreG (229 aa).

24-31 (GPVGSGKT) is a binding site for GTP.

The protein belongs to the SIMIBI class G3E GTPase family. UreG subfamily. In terms of assembly, homodimer. UreD, UreF and UreG form a complex that acts as a GTP-hydrolysis-dependent molecular chaperone, activating the urease apoprotein by helping to assemble the nickel containing metallocenter of UreC. The UreE protein probably delivers the nickel.

Its subcellular location is the cytoplasm. In terms of biological role, facilitates the functional incorporation of the urease nickel metallocenter. This process requires GTP hydrolysis, probably effectuated by UreG. The sequence is that of Urease accessory protein UreG from Albidiferax ferrireducens (strain ATCC BAA-621 / DSM 15236 / T118) (Rhodoferax ferrireducens).